The primary structure comprises 143 residues: Transcriptional regulator MraZ (143 aa).

2 consecutive SpoVT-AbrB domains span residues 5–47 (EYLH…PLDE) and 76–119 (ATEC…SQAL).

Belongs to the MraZ family. Forms oligomers.

The protein localises to the cytoplasm. It is found in the nucleoid. The protein is Transcriptional regulator MraZ of Desulfitobacterium hafniense (strain Y51).